A 92-amino-acid chain; its full sequence is Small ribosomal subunit protein uS19 (92 aa).

It belongs to the universal ribosomal protein uS19 family.

Its function is as follows. Protein S19 forms a complex with S13 that binds strongly to the 16S ribosomal RNA. This Bacillus thuringiensis subsp. konkukian (strain 97-27) protein is Small ribosomal subunit protein uS19.